Consider the following 448-residue polypeptide: Ribosomal protein uS12 methylthiotransferase RimO (448 aa).

The MTTase N-terminal domain maps to 6–116 (PKVGIVSLGC…VVEAVHAAIP (111 aa)). Positions 15, 51, 80, 147, 151, and 154 each coordinate [4Fe-4S] cluster. In terms of domain architecture, Radical SAM core spans 133–371 (LTPHHYAYLK…EAARQIADER (239 aa)). Residues 373–439 (AAKEGTRIEV…DYDLWGDVVE (67 aa)) form the TRAM domain.

Belongs to the methylthiotransferase family. RimO subfamily. [4Fe-4S] cluster serves as cofactor.

It localises to the cytoplasm. It carries out the reaction L-aspartate(89)-[ribosomal protein uS12]-hydrogen + (sulfur carrier)-SH + AH2 + 2 S-adenosyl-L-methionine = 3-methylsulfanyl-L-aspartate(89)-[ribosomal protein uS12]-hydrogen + (sulfur carrier)-H + 5'-deoxyadenosine + L-methionine + A + S-adenosyl-L-homocysteine + 2 H(+). Functionally, catalyzes the methylthiolation of an aspartic acid residue of ribosomal protein uS12. This chain is Ribosomal protein uS12 methylthiotransferase RimO, found in Paramagnetospirillum magneticum (strain ATCC 700264 / AMB-1) (Magnetospirillum magneticum).